The primary structure comprises 126 residues: Protein ApaG (126 aa).

Positions 2–126 constitute an ApaG domain; that stretch reads SQVESPIKIK…FRLAVPGIFQ (125 aa).

This Shewanella frigidimarina (strain NCIMB 400) protein is Protein ApaG.